The sequence spans 495 residues: Pre-glycoprotein polyprotein GP complex (495 aa).

Glycine 2 carries N-myristoyl glycine; by host lipidation. Residues 2–17 (GQIITFFQEVPHIIEE) are Extracellular-facing. A helical transmembrane segment spans residues 18-33 (VMNIVLITLSLLAILK). Over 34–58 (GVYNVMTCGLIGLISFLLLCGKSCS) the chain is Cytoplasmic. Residue cysteine 57 coordinates Zn(2+). Topologically, residues 59–436 (LIYKDTYNFS…QGKTPLGLVD (378 aa)) are extracellular. Asparagine 78, asparagine 88, asparagine 107, asparagine 117, and asparagine 165 each carry an N-linked (GlcNAc...) asparagine; by host glycan. 6 disulfide bridges follow: cysteine 85/cysteine 235, cysteine 116/cysteine 153, cysteine 178/cysteine 216, cysteine 283/cysteine 296, cysteine 305/cysteine 314, and cysteine 368/cysteine 389. The N-linked (GlcNAc...) asparagine; by host glycan is linked to asparagine 228. N-linked (GlcNAc...) asparagine; by host glycans are attached at residues asparagine 369, asparagine 377, asparagine 394, and asparagine 399. Residues 437–457 (LFIFSTSFYSITVFLHLIKIP) form a helical membrane-spanning segment. The Cytoplasmic segment spans residues 458–495 (THRHIVGQGCPKPHRLNSRAICSCGAYKQPGLPTKWKR). Residues histidine 459, histidine 461, cysteine 467, histidine 471, cysteine 479, and cysteine 481 each coordinate Zn(2+).

The protein belongs to the arenaviridae GPC protein family. In terms of assembly, interacts with glycoprotein G2. Part of the GP complex (GP-C) together with glycoprotein G1 and glycoprotein G2. The GP-complex interacts with protein Z, which interacts with ribonucleocapsid; these interactions may induce virion budding. As to quaternary structure, homotrimer; disulfide-linked. In pre-fusion state, G1 homotrimers bind G2 homotrimers via ionic interactions. Part of the GP complex (GP-C) together with glycoprotein G2 and the stable signal peptide. The GP-complex interacts with protein Z, which interacts with ribonucleocapsid; these interactions may induce virion budding. Homotrimer. Interacts with the stable signal peptide. In pre-fusion state, G2 homotrimers bind G1 homotrimers via ionic interactions. Part of the GP complex (GP-C) together with glycoprotein G1 and the stable signal peptide. Acidification in the endosome triggers rearrangements, which ultimately leads to a 6 helix bundle formed by the two heptad repeat domains (HR1 and HR2) in post-fusion state. The GP-complex interacts with protein Z, which interacts with ribonucleocapsid; these interactions may induce virion budding. In terms of processing, specific enzymatic cleavages in vivo yield mature proteins. GP-C polyprotein is cleaved in the endoplasmic reticulum by the host protease MBTPS1. Only cleaved glycoprotein is incorporated into virions. Post-translationally, the SSP remains stably associated with the GP complex following cleavage by signal peptidase and plays crucial roles in the trafficking of GP through the secretory pathway. Myristoylation is necessary for GP2-mediated fusion activity.

It localises to the virion membrane. The protein localises to the host endoplasmic reticulum membrane. The protein resides in the host Golgi apparatus membrane. Its subcellular location is the host cell membrane. Functions as a cleaved signal peptide that is retained as the third component of the GP complex (GP-C). Helps to stabilize the spike complex in its native conformation. The SSP is required for efficient glycoprotein expression, post-translational maturation cleavage of G1 and G2, glycoprotein transport to the cell surface plasma membrane, formation of infectious virus particles, and acid pH-dependent glycoprotein-mediated cell fusion. In terms of biological role, forms the virion spikes together with glycoprotein G2. The glycoprotein spike trimers are connected to the underlying matrix. Mediates virus attachment to host receptor alpha-dystroglycan DAG1. This interaction leads to virion entry into the host cell through the endosomal pathway. Its function is as follows. Forms the virion spikes together with glycoprotein G1. The glycoprotein spike trimers are connected to the underlying matrix. Class I viral fusion protein that directs fusion of viral and host endosomal membranes, leading to delivery of the nucleocapsid into the cytoplasm. Membrane fusion is mediated by irreversible conformational changes induced by acidification. This is Pre-glycoprotein polyprotein GP complex from Ippy mammarenavirus (isolate Rat/Central African Republic/Dak An B 188 d/1970) (IPPYV).